A 648-amino-acid chain; its full sequence is Activatory protein CHA4 (648 aa).

Over residues 1-10 the composition is skewed to pro residues; the sequence is MMLEPSPPPL. Residues 1-37 form a disordered region; it reads MMLEPSPPPLTTTVTPSLPSSLKKSVTDNDQNNNNVP. Positions 11 to 22 are enriched in low complexity; it reads TTTVTPSLPSSL. Residues 44-70 constitute a DNA-binding region (zn(2)-C6 fungal-type); the sequence is CQNCRRRRRKCNMEKPCSNCIKFRTEC. Positions 140-177 are disordered; it reads AQSALPSSESNDENESDAFTKKMPSESPPPVGTNSIYP. Phosphoserine occurs at positions 164 and 166.

The protein resides in the nucleus. Activates the CHA1 gene for L-serine dehydratase. Binds to the DNA sequence 5'-GVGGARAYRTRATTCCRC-3'. The chain is Activatory protein CHA4 (CHA4) from Saccharomyces cerevisiae (strain ATCC 204508 / S288c) (Baker's yeast).